Here is a 95-residue protein sequence, read N- to C-terminus: Large ribosomal subunit protein uL23 (95 aa).

The protein belongs to the universal ribosomal protein uL23 family. As to quaternary structure, part of the 50S ribosomal subunit. Contacts protein L29, and trigger factor when it is bound to the ribosome.

Its function is as follows. One of the early assembly proteins it binds 23S rRNA. One of the proteins that surrounds the polypeptide exit tunnel on the outside of the ribosome. Forms the main docking site for trigger factor binding to the ribosome. The polypeptide is Large ribosomal subunit protein uL23 (Geobacillus kaustophilus (strain HTA426)).